Consider the following 196-residue polypeptide: Small ribosomal subunit protein uS4c (196 aa).

Positions 89–169 (MRLDNIIFRL…LPKHLTIDTV (81 aa)) constitute an S4 RNA-binding domain.

It belongs to the universal ribosomal protein uS4 family. Part of the 30S ribosomal subunit. Contacts protein S5. The interaction surface between S4 and S5 is involved in control of translational fidelity.

It is found in the plastid. It localises to the chloroplast. One of the primary rRNA binding proteins, it binds directly to 16S rRNA where it nucleates assembly of the body of the 30S subunit. In terms of biological role, with S5 and S12 plays an important role in translational accuracy. This Stipellula capensis (Cape rice grass) protein is Small ribosomal subunit protein uS4c (rps4).